The sequence spans 458 residues: Bifunctional protein GlmU (458 aa).

Residues 1–230 (MSLPTYSKLN…EWQVAGINSK (230 aa)) are pyrophosphorylase. UDP-N-acetyl-alpha-D-glucosamine contacts are provided by residues 14 to 17 (LAAG), lysine 28, glutamine 79, and 84 to 85 (GT). Aspartate 108 lines the Mg(2+) pocket. UDP-N-acetyl-alpha-D-glucosamine-binding residues include glycine 141, glutamate 155, asparagine 170, and asparagine 228. Asparagine 228 serves as a coordination point for Mg(2+). Positions 231 to 251 (QDLAALERVYQGRYAARLLAK) are linker. The interval 252 to 458 (GVTLADPSRI…NWKRPEKVKK (207 aa)) is N-acetyltransferase. Residues arginine 334 and lysine 352 each coordinate UDP-N-acetyl-alpha-D-glucosamine. Catalysis depends on histidine 364, which acts as the Proton acceptor. 2 residues coordinate UDP-N-acetyl-alpha-D-glucosamine: tyrosine 367 and asparagine 378. Residues alanine 381, 387–388 (NY), serine 406, alanine 424, and arginine 441 each bind acetyl-CoA.

This sequence in the N-terminal section; belongs to the N-acetylglucosamine-1-phosphate uridyltransferase family. The protein in the C-terminal section; belongs to the transferase hexapeptide repeat family. As to quaternary structure, homotrimer. It depends on Mg(2+) as a cofactor.

It localises to the cytoplasm. It carries out the reaction alpha-D-glucosamine 1-phosphate + acetyl-CoA = N-acetyl-alpha-D-glucosamine 1-phosphate + CoA + H(+). It catalyses the reaction N-acetyl-alpha-D-glucosamine 1-phosphate + UTP + H(+) = UDP-N-acetyl-alpha-D-glucosamine + diphosphate. Its pathway is nucleotide-sugar biosynthesis; UDP-N-acetyl-alpha-D-glucosamine biosynthesis; N-acetyl-alpha-D-glucosamine 1-phosphate from alpha-D-glucosamine 6-phosphate (route II): step 2/2. It functions in the pathway nucleotide-sugar biosynthesis; UDP-N-acetyl-alpha-D-glucosamine biosynthesis; UDP-N-acetyl-alpha-D-glucosamine from N-acetyl-alpha-D-glucosamine 1-phosphate: step 1/1. The protein operates within bacterial outer membrane biogenesis; LPS lipid A biosynthesis. Its function is as follows. Catalyzes the last two sequential reactions in the de novo biosynthetic pathway for UDP-N-acetylglucosamine (UDP-GlcNAc). The C-terminal domain catalyzes the transfer of acetyl group from acetyl coenzyme A to glucosamine-1-phosphate (GlcN-1-P) to produce N-acetylglucosamine-1-phosphate (GlcNAc-1-P), which is converted into UDP-GlcNAc by the transfer of uridine 5-monophosphate (from uridine 5-triphosphate), a reaction catalyzed by the N-terminal domain. The sequence is that of Bifunctional protein GlmU from Methylobacillus flagellatus (strain ATCC 51484 / DSM 6875 / VKM B-1610 / KT).